A 438-amino-acid polypeptide reads, in one-letter code: Coenzyme A disulfide reductase (438 aa).

An FAD-binding site is contributed by 8 to 33 (GAVAGGATCASQIRRLDKESEIIVFE). The substrate site is built by threonine 15, glutamine 19, arginine 22, serine 39, and asparagine 42. The active-site Nucleophile is the cysteine 43. The active-site Redox-active is the cysteine 43. Residue lysine 71 coordinates substrate. Position 151–166 (151–166 (ALVVGAGYISLEVLEN)) interacts with NADP(+). 267–277 (TNIPNIYALGD) provides a ligand contact to FAD. Histidine 299 provides a ligand contact to substrate. Tyrosine 419 lines the FAD pocket. Lysine 427 contributes to the substrate binding site.

It belongs to the class-III pyridine nucleotide-disulfide oxidoreductase family. In terms of assembly, homodimer. The cofactor is FAD.

The catalysed reaction is NADP(+) + 2 CoA = CoA-disulfide + NADPH + H(+). Its function is as follows. Catalyzes specifically the NADPH-dependent reduction of coenzyme A disulfide. In Staphylococcus epidermidis (strain ATCC 35984 / DSM 28319 / BCRC 17069 / CCUG 31568 / BM 3577 / RP62A), this protein is Coenzyme A disulfide reductase.